The following is a 427-amino-acid chain: Enolase (427 aa).

Gln162 contributes to the (2R)-2-phosphoglycerate binding site. Glu204 acts as the Proton donor in catalysis. Positions 241, 283, and 310 each coordinate Mg(2+). 4 residues coordinate (2R)-2-phosphoglycerate: Lys335, Arg364, Ser365, and Lys386. Catalysis depends on Lys335, which acts as the Proton acceptor.

It belongs to the enolase family. It depends on Mg(2+) as a cofactor.

It is found in the cytoplasm. It localises to the secreted. The protein resides in the cell surface. The enzyme catalyses (2R)-2-phosphoglycerate = phosphoenolpyruvate + H2O. It participates in carbohydrate degradation; glycolysis; pyruvate from D-glyceraldehyde 3-phosphate: step 4/5. Catalyzes the reversible conversion of 2-phosphoglycerate (2-PG) into phosphoenolpyruvate (PEP). It is essential for the degradation of carbohydrates via glycolysis. The polypeptide is Enolase (Mycolicibacterium smegmatis (strain ATCC 700084 / mc(2)155) (Mycobacterium smegmatis)).